The chain runs to 118 residues: Holo-[acyl-carrier-protein] synthase (118 aa).

Asp5 and Glu50 together coordinate Mg(2+).

It belongs to the P-Pant transferase superfamily. AcpS family. Requires Mg(2+) as cofactor.

It is found in the cytoplasm. The catalysed reaction is apo-[ACP] + CoA = holo-[ACP] + adenosine 3',5'-bisphosphate + H(+). Its function is as follows. Transfers the 4'-phosphopantetheine moiety from coenzyme A to a Ser of acyl-carrier-protein. The protein is Holo-[acyl-carrier-protein] synthase of Wolinella succinogenes (strain ATCC 29543 / DSM 1740 / CCUG 13145 / JCM 31913 / LMG 7466 / NCTC 11488 / FDC 602W) (Vibrio succinogenes).